Reading from the N-terminus, the 478-residue chain is 3-isopropylmalate dehydratase large subunit (478 aa).

3 residues coordinate [4Fe-4S] cluster: Cys357, Cys418, and Cys421.

Belongs to the aconitase/IPM isomerase family. LeuC type 1 subfamily. Heterodimer of LeuC and LeuD. The cofactor is [4Fe-4S] cluster.

The enzyme catalyses (2R,3S)-3-isopropylmalate = (2S)-2-isopropylmalate. It functions in the pathway amino-acid biosynthesis; L-leucine biosynthesis; L-leucine from 3-methyl-2-oxobutanoate: step 2/4. Its function is as follows. Catalyzes the isomerization between 2-isopropylmalate and 3-isopropylmalate, via the formation of 2-isopropylmaleate. The protein is 3-isopropylmalate dehydratase large subunit of Novosphingobium aromaticivorans (strain ATCC 700278 / DSM 12444 / CCUG 56034 / CIP 105152 / NBRC 16084 / F199).